The following is a 247-amino-acid chain: Segregation and condensation protein A (247 aa).

The protein belongs to the ScpA family. In terms of assembly, component of a cohesin-like complex composed of ScpA, ScpB and the Smc homodimer, in which ScpA and ScpB bind to the head domain of Smc. The presence of the three proteins is required for the association of the complex with DNA.

Its subcellular location is the cytoplasm. Participates in chromosomal partition during cell division. May act via the formation of a condensin-like complex containing Smc and ScpB that pull DNA away from mid-cell into both cell halves. In Mycoplasma mobile (strain ATCC 43663 / 163K / NCTC 11711) (Mesomycoplasma mobile), this protein is Segregation and condensation protein A.